The chain runs to 484 residues: Diaminopimelate decarboxylase 1, chloroplastic (484 aa).

Residues M1–R28 show a composition bias toward polar residues. A disordered region spans residues M1–I30. A chloroplast-targeting transit peptide spans M1–A49. A50 carries the N-acetylalanine modification. K125 carries the post-translational modification N6-(pyridoxal phosphate)lysine. Pyridoxal 5'-phosphate contacts are provided by residues G304 and E340–R343. Positions 343, 379, and 383 each coordinate substrate. Catalysis depends on C411, which acts as the Proton donor. The substrate site is built by E412 and Y440. Y440 serves as a coordination point for pyridoxal 5'-phosphate.

It belongs to the Orn/Lys/Arg decarboxylase class-II family. LysA subfamily. In terms of assembly, homodimer. It depends on pyridoxal 5'-phosphate as a cofactor.

It localises to the plastid. The protein localises to the chloroplast. The catalysed reaction is meso-2,6-diaminopimelate + H(+) = L-lysine + CO2. It functions in the pathway amino-acid biosynthesis; L-lysine biosynthesis via DAP pathway; L-lysine from DL-2,6-diaminopimelate: step 1/1. Specifically catalyzes the decarboxylation of meso-diaminopimelate (meso-DAP) to L-lysine. The sequence is that of Diaminopimelate decarboxylase 1, chloroplastic (LYSA1) from Arabidopsis thaliana (Mouse-ear cress).